Reading from the N-terminus, the 182-residue chain is Sec-independent protein translocase protein TatB (182 aa).

The chain crosses the membrane as a helical span at residues 1-21; that stretch reads MFDIGFSELLLVFVIGLIVLG. Disordered regions lie at residues 88–107 and 121–182; these read AAESMKRTYSANDPEQASDE and TQHE…SDKP. Positions 168 to 182 are enriched in low complexity; sequence AAPVVESSPSSSDKP.

Belongs to the TatB family. The Tat system comprises two distinct complexes: a TatABC complex, containing multiple copies of TatA, TatB and TatC subunits, and a separate TatA complex, containing only TatA subunits. Substrates initially bind to the TatABC complex, which probably triggers association of the separate TatA complex to form the active translocon.

It localises to the cell inner membrane. In terms of biological role, part of the twin-arginine translocation (Tat) system that transports large folded proteins containing a characteristic twin-arginine motif in their signal peptide across membranes. Together with TatC, TatB is part of a receptor directly interacting with Tat signal peptides. TatB may form an oligomeric binding site that transiently accommodates folded Tat precursor proteins before their translocation. The protein is Sec-independent protein translocase protein TatB of Salmonella typhi.